A 511-amino-acid chain; its full sequence is ADP,ATP carrier protein 4 (511 aa).

12 helical membrane-spanning segments follow: residues 34–54 (VSKF…QNLI), 71–91 (ISFL…AIYV), 102–122 (IFYL…YVIF), 157–177 (FSLF…LLFW), 192–212 (FYPL…QFLE), 231–251 (FHTL…IIAI), 296–316 (LIAT…GPWK), 330–350 (AAFI…FVVL), 361–381 (FTAA…FFAV), 390–410 (LIIA…IGAI), 453–473 (LGKS…PSAS), and 476–496 (SISI…LWAT).

Belongs to the ADP/ATP translocase tlc family.

The protein resides in the cell membrane. Functionally, provides the rickettsial cell with host ATP in exchange for rickettsial ADP. This is an obligate exchange system. This energy acquiring activity is an important component of rickettsial parasitism. The sequence is that of ADP,ATP carrier protein 4 (tlcD) from Rickettsia felis (strain ATCC VR-1525 / URRWXCal2) (Rickettsia azadi).